Here is a 419-residue protein sequence, read N- to C-terminus: Peptide chain release factor subunit 1 (419 aa).

The protein belongs to the eukaryotic release factor 1 family. As to quaternary structure, heterodimer of two subunits, one of which binds GTP.

The protein localises to the cytoplasm. Functionally, directs the termination of nascent peptide synthesis (translation) in response to the termination codons UAA, UAG and UGA. This Methanococcus maripaludis (strain C6 / ATCC BAA-1332) protein is Peptide chain release factor subunit 1.